The chain runs to 317 residues: Acetyl-coenzyme A carboxylase carboxyl transferase subunit alpha (317 aa).

A CoA carboxyltransferase C-terminal domain is found at 39–293 (RLETKAREAL…GDAIADALSQ (255 aa)).

This sequence belongs to the AccA family. Acetyl-CoA carboxylase is a heterohexamer composed of biotin carboxyl carrier protein (AccB), biotin carboxylase (AccC) and two subunits each of ACCase subunit alpha (AccA) and ACCase subunit beta (AccD).

It is found in the cytoplasm. The enzyme catalyses N(6)-carboxybiotinyl-L-lysyl-[protein] + acetyl-CoA = N(6)-biotinyl-L-lysyl-[protein] + malonyl-CoA. It functions in the pathway lipid metabolism; malonyl-CoA biosynthesis; malonyl-CoA from acetyl-CoA: step 1/1. Functionally, component of the acetyl coenzyme A carboxylase (ACC) complex. First, biotin carboxylase catalyzes the carboxylation of biotin on its carrier protein (BCCP) and then the CO(2) group is transferred by the carboxyltransferase to acetyl-CoA to form malonyl-CoA. The sequence is that of Acetyl-coenzyme A carboxylase carboxyl transferase subunit alpha from Xanthobacter autotrophicus (strain ATCC BAA-1158 / Py2).